Consider the following 223-residue polypeptide: Neurotrophic factor BDNF precursor form (223 aa).

The N-terminal stretch at 1-5 (SCMKA) is a signal peptide. Positions 6–114 (APMKEVSIRG…AANMSMRVRR (109 aa)) are excised as a propeptide. An N-linked (GlcNAc...) asparagine glycan is attached at N107. Disulfide bonds link C127–C194 and C172–C223.

It belongs to the NGF-beta family.

The protein resides in the secreted. In terms of biological role, promotes the survival of neuronal populations that are all located either in the central nervous system or directly connected to it. The polypeptide is Neurotrophic factor BDNF precursor form (BDNF) (Eryx johnii (Indian red sand boa)).